A 606-amino-acid chain; its full sequence is Pickpocket protein 28 (606 aa).

The segment at 1-26 (MRTLTESRRRQSGSSGCKKDSESDDD) is disordered. 2 consecutive transmembrane segments (helical) span residues 66-86 (IFFG…ISNV) and 490-510 (GLLG…FFYI).

This sequence belongs to the amiloride-sensitive sodium channel (TC 1.A.6) family. As to expression, expressed in water-sensing neurons in taste bristles on the proboscis but not in carbonation-sensing taste peg neurons (at protein level). Expressed in the tracheal system.

It is found in the cell membrane. Its function is as follows. Osmosensitive ion channel that mediates the cellular and behavioral response to water. Plays an essential role in gustatory water reception. Part of a complex that plays a role in tracheal liquid clearance. Probable role in sodium transport. The sequence is that of Pickpocket protein 28 (ppk28) from Drosophila melanogaster (Fruit fly).